The sequence spans 758 residues: MSELSQMTLKILYTLDNGSNGSYLARSRAPKQVRVANIPSPFPTDSNEQTELRIGAIHLKTILHEIYLNSPEVLDHDTLKDGYDYNLYYRDICEVDEPLVSLGLLSGLRKKFHKNSPYQYTENNIGEEESEERDEVTEEEYEDESFIVTGRVCSNVSALLRRSYSNISNKKGRVVNNQIPEETLEVKLRFTKVITNLRTSGNNTTNSRISCLQMPSSLPSATLPFTPKSQSLFKTNQIKNSRNARTTITINNTNSGTVGRRQTNPMPAPKAVRTQSLPIWNLKPNIANTGFPRNSIAHKIYLADRKTEANQQNNQHQNIAYEINTLQNDNTIQRTKIDDSVSKRFDFMLNKRKSTKKVSPGIATIAKKPASININPKQPPKTSGEKKANDKQTIVKVKNSNSKNSAKSTQAGCRRSSVIEHLNDHDDSILSDILSEPGIEGQKLQQKQKGRKISLTSENDKENIPPQSITSKENKLEGDLDFNAEFPMSDFSDVVFKDEMGWFSNFNCNFFESPTSASASQLNQQNLKPSITLNDPNTCNTIALENEDVSELETAQNNKISLPSDVDKTSPIDSLSIPLIELTHSSSTTNMQRISIKEGSTLNITDSNNATPCDNDIKDRKASVIDSDNTKPQAGLINFSTPADQPASDNNVTASKKLTSMLETQQSKRSHEEVLDEEEEEEALKKQKAIPSSPCGMFNYHQPMELSEDIVEEEQGHNIGDDNESDKTNDLFSTFIHSGIRVSQVVTSPIGEFQSIKH.

Disordered regions lie at residues 251–271 (NNTNSGTVGRRQTNPMPAPKA), 372–414 (ININ…AGCR), 438–471 (GIEGQKLQQKQKGRKISLTSENDKENIPPQSITS), and 624–651 (VIDSDNTKPQAGLINFSTPADQPASDNN). The span at 395–408 (VKVKNSNSKNSAKS) shows a compositional bias: low complexity. Serine 454 carries the phosphoserine modification. Polar residues predominate over residues 626 to 651 (DSDNTKPQAGLINFSTPADQPASDNN).

Functionally, required for normal transcription at a number of loci in yeast. This chain is Protein SPT21 (SPT21), found in Saccharomyces cerevisiae (strain ATCC 204508 / S288c) (Baker's yeast).